An 87-amino-acid polypeptide reads, in one-letter code: Small ribosomal subunit protein uS17 (87 aa).

The protein belongs to the universal ribosomal protein uS17 family. As to quaternary structure, part of the 30S ribosomal subunit.

One of the primary rRNA binding proteins, it binds specifically to the 5'-end of 16S ribosomal RNA. This Pelotomaculum thermopropionicum (strain DSM 13744 / JCM 10971 / SI) protein is Small ribosomal subunit protein uS17.